Consider the following 261-residue polypeptide: Calbindin (261 aa).

The residue at position 2 (Ala-2) is an N-acetylalanine. The segment at Ala-2–Gln-7 is interaction with RANBP9. EF-hand domains lie at Ile-11–Ala-46, Glu-53–Phe-88, Lys-98–Lys-133, Lys-142–Phe-177, and Met-186–Lys-221. Ca(2+) contacts are provided by Asp-24, Asp-26, Ser-28, Tyr-30, and Glu-35. Residues Asp-111, Asp-113, Ser-115, Glu-122, Asp-155, Asn-157, Asp-159, Lys-161, Glu-166, Asp-199, Asp-201, Asn-203, Tyr-205, and Glu-210 each coordinate Ca(2+).

It belongs to the calbindin family. As to quaternary structure, interacts with RANBP9.

In terms of biological role, buffers cytosolic calcium. May stimulate a membrane Ca(2+)-ATPase and a 3',5'-cyclic nucleotide phosphodiesterase. The protein is Calbindin (CALB1) of Homo sapiens (Human).